The following is a 154-amino-acid chain: Probable transport accessory protein MmpS4 (154 aa).

Helical transmembrane passes span Ile19 to Val39 and Gln97 to Ala117.

This sequence belongs to the MmpS family.

It localises to the cell membrane. This chain is Probable transport accessory protein MmpS4, found in Mycobacterium leprae (strain TN).